Reading from the N-terminus, the 573-residue chain is SHC-transforming protein 2 (573 aa).

The 183-residue stretch at 125-307 (LGPGVSYIVR…TGLEESAWGD (183 aa)) folds into the PID domain. The region spanning 478–569 (WYHGRMSRRA…ESELHLRGVV (92 aa)) is the SH2 domain.

As to quaternary structure, interacts with the Trk receptors in a phosphotyrosine-dependent manner and MEGF12. Once activated, binds to GRB2. In terms of processing, phosphorylated on tyrosine by the Trk receptors.

Signaling adapter that couples activated growth factor receptors to signaling pathway in neurons. Involved in the signal transduction pathways of neurotrophin-activated Trk receptors in cortical neurons. The sequence is that of SHC-transforming protein 2 (Shc2) from Rattus norvegicus (Rat).